The following is a 21-amino-acid chain: Brevinin-2-related peptide (21 aa).

Leucine amide is present on leucine 21.

In terms of tissue distribution, expressed by the skin glands.

It is found in the secreted. Antimicrobial peptide with activity against Gram-negative and Gram-positive bacteria (MIC=13 uM against E.coli, MIC=25 uM against S.aureus) and fungi (MIC=25 uM against C.albicans). Also shows hemolytic activity (HC(50)=50 uM). In vitro, shows moderate inhibitory activity against HIV. The protein is Brevinin-2-related peptide of Lithobates septentrionalis (Mink frog).